The sequence spans 114 residues: uncharacterized protein (114 aa).

The first 19 residues, 1-19 (MKASYLVLIFISIFSMAQA), serve as a signal peptide directing secretion. At S41 the chain carries Phosphoserine.

This sequence belongs to the protease inhibitor I9 family.

This is an uncharacterized protein from Saccharomyces cerevisiae (strain ATCC 204508 / S288c) (Baker's yeast).